A 22-amino-acid chain; its full sequence is Caerin-3.5 (22 aa).

Lys22 bears the Lysine amide mark.

Expressed by the skin dorsal glands.

The protein localises to the secreted. Functionally, shows significant activity against Gram-positive organisms, but is less effective against Gram-negative organisms. The chain is Caerin-3.5 from Ranoidea gracilenta (Dainty green tree frog).